A 311-amino-acid polypeptide reads, in one-letter code: T-cell acute lymphocytic leukemia protein 1 homolog (311 aa).

The span at Met-1 to Ser-14 shows a compositional bias: pro residues. Residues Met-1–Ala-67 are disordered. The span at Asp-15–Glu-25 shows a compositional bias: basic and acidic residues. Positions Val-179–Leu-231 constitute a bHLH domain. The disordered stretch occupies residues Ser-265–Arg-311. Residues Thr-284 to His-294 are compositionally biased toward basic and acidic residues.

In terms of assembly, efficient DNA binding requires dimerization with another bHLH protein. Forms heterodimers with TCF3. Post-translationally, phosphorylated on serine residues.

The protein resides in the nucleus. Implicated in the genesis of hemopoietic malignancies. It may play an important role in hemopoietic differentiation. In Gallus gallus (Chicken), this protein is T-cell acute lymphocytic leukemia protein 1 homolog (TAL1).